The sequence spans 407 residues: 1-deoxy-D-xylulose 5-phosphate reductoisomerase (407 aa).

Threonine 25, glycine 26, serine 27, isoleucine 28, asparagine 53, and asparagine 136 together coordinate NADPH. Lysine 137 is a 1-deoxy-D-xylulose 5-phosphate binding site. Glutamate 138 contacts NADPH. Aspartate 162 serves as a coordination point for Mn(2+). 4 residues coordinate 1-deoxy-D-xylulose 5-phosphate: serine 163, glutamate 164, serine 188, and histidine 211. Residue glutamate 164 participates in Mn(2+) binding. Residue glycine 217 coordinates NADPH. 1-deoxy-D-xylulose 5-phosphate contacts are provided by serine 224, asparagine 229, lysine 230, and glutamate 233. Glutamate 233 is a Mn(2+) binding site.

It belongs to the DXR family. It depends on Mg(2+) as a cofactor. Mn(2+) is required as a cofactor.

The enzyme catalyses 2-C-methyl-D-erythritol 4-phosphate + NADP(+) = 1-deoxy-D-xylulose 5-phosphate + NADPH + H(+). The protein operates within isoprenoid biosynthesis; isopentenyl diphosphate biosynthesis via DXP pathway; isopentenyl diphosphate from 1-deoxy-D-xylulose 5-phosphate: step 1/6. Its function is as follows. Catalyzes the NADPH-dependent rearrangement and reduction of 1-deoxy-D-xylulose-5-phosphate (DXP) to 2-C-methyl-D-erythritol 4-phosphate (MEP). This is 1-deoxy-D-xylulose 5-phosphate reductoisomerase from Nitrobacter hamburgensis (strain DSM 10229 / NCIMB 13809 / X14).